The sequence spans 196 residues: uncharacterized protein (196 aa).

The HTH tetR-type domain maps to 7–67 (RNTKEKILTA…AVIDNHVKIW (61 aa)). Positions 30 to 49 (SINDILDETATGKGQFYYYF) form a DNA-binding region, H-T-H motif.

This is an uncharacterized protein from Lactococcus lactis subsp. lactis (Streptococcus lactis).